Reading from the N-terminus, the 491-residue chain is Probable G-protein coupled receptor Mth-like 7 (491 aa).

A signal peptide spans methionine 1–alanine 22. N-linked (GlcNAc...) asparagine glycans are attached at residues asparagine 18 and asparagine 42. At aspartate 23–lysine 167 the chain is on the extracellular side. Disulfide bonds link cysteine 27–cysteine 80, cysteine 82–cysteine 87, and cysteine 92–cysteine 103. The chain crosses the membrane as a helical span at residues cysteine 168–glutamate 188. Residues lysine 189–serine 222 lie on the Cytoplasmic side of the membrane. Residues leucine 223–isoleucine 243 traverse the membrane as a helical segment. The Extracellular segment spans residues lysine 244 to lysine 252. The N-linked (GlcNAc...) asparagine glycan is linked to asparagine 248. A helical membrane pass occupies residues cysteine 253–leucine 273. The Cytoplasmic segment spans residues asparagine 274–asparagine 325. Residues alanine 326–tryptophan 346 form a helical membrane-spanning segment. The Extracellular portion of the chain corresponds to glutamate 347 to serine 372. Residues valine 373–alanine 393 traverse the membrane as a helical segment. Topologically, residues leucine 394 to serine 434 are cytoplasmic. Residues isoleucine 435–phenylalanine 455 traverse the membrane as a helical segment. The Extracellular portion of the chain corresponds to tryptophan 456–tryptophan 458. The helical transmembrane segment at valine 459 to valine 479 threads the bilayer. Residues leucine 480–serine 491 are Cytoplasmic-facing.

The protein belongs to the G-protein coupled receptor 2 family. Mth subfamily.

The protein resides in the cell membrane. The polypeptide is Probable G-protein coupled receptor Mth-like 7 (mthl7) (Drosophila melanogaster (Fruit fly)).